Consider the following 196-residue polypeptide: Ribosomal RNA large subunit methyltransferase E (196 aa).

S-adenosyl-L-methionine is bound by residues glycine 52, tryptophan 54, aspartate 72, aspartate 88, and aspartate 111. Lysine 151 acts as the Proton acceptor in catalysis.

It belongs to the class I-like SAM-binding methyltransferase superfamily. RNA methyltransferase RlmE family.

Its subcellular location is the cytoplasm. The enzyme catalyses uridine(2552) in 23S rRNA + S-adenosyl-L-methionine = 2'-O-methyluridine(2552) in 23S rRNA + S-adenosyl-L-homocysteine + H(+). Functionally, specifically methylates the uridine in position 2552 of 23S rRNA at the 2'-O position of the ribose in the fully assembled 50S ribosomal subunit. This is Ribosomal RNA large subunit methyltransferase E from Cenarchaeum symbiosum (strain A).